We begin with the raw amino-acid sequence, 175 residues long: Transcriptional repressor NrdR (175 aa).

A zinc finger spans residues 3 to 32 (CPYCSHPDTKVIDSRDVDDGVRRRRECVVC). Residues 47 to 137 (LFVVKKDQRR…VYREFTDITQ (91 aa)) form the ATP-cone domain.

This sequence belongs to the NrdR family. It depends on Zn(2+) as a cofactor.

Negatively regulates transcription of bacterial ribonucleotide reductase nrd genes and operons by binding to NrdR-boxes. The chain is Transcriptional repressor NrdR from Dehalococcoides mccartyi (strain ATCC BAA-2266 / KCTC 15142 / 195) (Dehalococcoides ethenogenes (strain 195)).